The following is a 77-amino-acid chain: Conotoxin Lt7.1 (77 aa).

The N-terminal stretch at 1–19 is a signal peptide; sequence MEKLTILLLVAALLMSTQG. The propeptide occupies 20-49; sequence LIQSGGENRPKEKIKFLSKRKTVAESWWEG. 3 disulfides stabilise this stretch: Cys51-Cys65, Cys58-Cys69, and Cys64-Cys74.

The protein belongs to the conotoxin O2 superfamily. Expressed by the venom duct.

The protein resides in the secreted. This is Conotoxin Lt7.1 from Conus litteratus (Lettered cone).